Here is an 800-residue protein sequence, read N- to C-terminus: DEP domain-containing protein 1A (800 aa).

In terms of domain architecture, DEP spans 24 to 108; that stretch reads FRAGMPLKKH…DNSQLYRFPS (85 aa). Disordered regions lie at residues 147–173, 306–326, and 459–485; these read ETLE…RSRE, SQPG…AKNP, and INTS…ARAR. The 41-residue stretch at 281-321 folds into the Rho-GAP domain; it reads PLLTYQYYELFVNILVMCGYITTPKSQPGKRKNQEEPNCPQ. Low complexity predominate over residues 459–468; the sequence is INTSGSSVSS.

The polypeptide is DEP domain-containing protein 1A (depdc1a) (Danio rerio (Zebrafish)).